Consider the following 204-residue polypeptide: LTTGLSSWFHNYGNLLLMLGFLLMIMTMIQWWRDIIRESTFQGFHTTKVYNGLRWGMMLFIVSEICFFFAFFWAYFHSSLAPNTDIGACWPPINIYPLNPFQIPLLNTAILLSSGVSVTWAHHSLMSNKLNPAIHSMTITITLGFYFTFLQMMEYIEASFSISDSIYGSTFFVATGFHGLHVIIGSTFLFMCLIRIIMNHFSST.

Helical transmembrane passes span 12-32, 56-76, 101-121, 133-153, and 171-191; these read YGNL…IQWW, GMML…WAYF, FQIP…VTWA, AIHS…LQMM, and FFVA…FLFM.

This sequence belongs to the cytochrome c oxidase subunit 3 family. Component of the cytochrome c oxidase (complex IV, CIV), a multisubunit enzyme composed of a catalytic core of 3 subunits and several supernumerary subunits. The complex exists as a monomer or a dimer and forms supercomplexes (SCs) in the inner mitochondrial membrane with ubiquinol-cytochrome c oxidoreductase (cytochrome b-c1 complex, complex III, CIII).

The protein localises to the mitochondrion inner membrane. It carries out the reaction 4 Fe(II)-[cytochrome c] + O2 + 8 H(+)(in) = 4 Fe(III)-[cytochrome c] + 2 H2O + 4 H(+)(out). Functionally, component of the cytochrome c oxidase, the last enzyme in the mitochondrial electron transport chain which drives oxidative phosphorylation. The respiratory chain contains 3 multisubunit complexes succinate dehydrogenase (complex II, CII), ubiquinol-cytochrome c oxidoreductase (cytochrome b-c1 complex, complex III, CIII) and cytochrome c oxidase (complex IV, CIV), that cooperate to transfer electrons derived from NADH and succinate to molecular oxygen, creating an electrochemical gradient over the inner membrane that drives transmembrane transport and the ATP synthase. Cytochrome c oxidase is the component of the respiratory chain that catalyzes the reduction of oxygen to water. Electrons originating from reduced cytochrome c in the intermembrane space (IMS) are transferred via the dinuclear copper A center (CU(A)) of subunit 2 and heme A of subunit 1 to the active site in subunit 1, a binuclear center (BNC) formed by heme A3 and copper B (CU(B)). The BNC reduces molecular oxygen to 2 water molecules using 4 electrons from cytochrome c in the IMS and 4 protons from the mitochondrial matrix. This Enteroctopus dofleini (North Pacific giant octopus) protein is Cytochrome c oxidase subunit 3 (COIII).